The following is a 196-amino-acid chain: ATP-dependent Clp protease proteolytic subunit (196 aa).

The active-site Nucleophile is the serine 101. The active site involves histidine 126.

Belongs to the peptidase S14 family. In terms of assembly, component of the chloroplastic Clp protease core complex.

It localises to the plastid. The protein resides in the chloroplast stroma. It catalyses the reaction Hydrolysis of proteins to small peptides in the presence of ATP and magnesium. alpha-casein is the usual test substrate. In the absence of ATP, only oligopeptides shorter than five residues are hydrolyzed (such as succinyl-Leu-Tyr-|-NHMec, and Leu-Tyr-Leu-|-Tyr-Trp, in which cleavage of the -Tyr-|-Leu- and -Tyr-|-Trp bonds also occurs).. Cleaves peptides in various proteins in a process that requires ATP hydrolysis. Has a chymotrypsin-like activity. Plays a major role in the degradation of misfolded proteins. The protein is ATP-dependent Clp protease proteolytic subunit of Vitis vinifera (Grape).